The primary structure comprises 257 residues: MKAHKIFWLNLAAIIIISIVVSGGMFLAMKWEQIHLKDGLKKVLSTYPIKNLETLYEIDGHDNPHYENNDQDTWYIESSYSVVGSDELLKEDRMLLKVDKNTHKITGEYDTTTNDRKNATDSTYKSYPVKVVNNKIVFTKDVKDPALKQKIENNQFLIQSGDLTSILNSNDLKVTHDPTTDYYNLSGKLSNDNPNVKQLKRRYNIPRNASTKVELKGMSDLKGNNHQDQKLYFYFSSPGKDQIIYKESLTYNKLSEH.

Residues 6-26 traverse the membrane as a helical segment; the sequence is IFWLNLAAIIIISIVVSGGMF.

The protein belongs to the staphylococcal tandem lipoprotein family.

The protein localises to the cell membrane. This is an uncharacterized protein from Staphylococcus aureus (strain MSSA476).